The primary structure comprises 101 residues: Large ribosomal subunit protein uL23 (101 aa).

It belongs to the universal ribosomal protein uL23 family. Part of the 50S ribosomal subunit. Contacts protein L29, and trigger factor when it is bound to the ribosome.

Its function is as follows. One of the early assembly proteins it binds 23S rRNA. One of the proteins that surrounds the polypeptide exit tunnel on the outside of the ribosome. Forms the main docking site for trigger factor binding to the ribosome. The chain is Large ribosomal subunit protein uL23 from Corynebacterium diphtheriae (strain ATCC 700971 / NCTC 13129 / Biotype gravis).